The chain runs to 213 residues: Octanoyltransferase (213 aa).

Positions 36–211 constitute a BPL/LPL catalytic domain; that stretch reads TNTPDEIWLV…KFCQQLGFKL (176 aa). Residues 75-82, 142-144, and 155-157 contribute to the substrate site; these read RGGQVTYH, SLG, and GLA. The active-site Acyl-thioester intermediate is the cysteine 173.

This sequence belongs to the LipB family.

The protein resides in the cytoplasm. It catalyses the reaction octanoyl-[ACP] + L-lysyl-[protein] = N(6)-octanoyl-L-lysyl-[protein] + holo-[ACP] + H(+). Its pathway is protein modification; protein lipoylation via endogenous pathway; protein N(6)-(lipoyl)lysine from octanoyl-[acyl-carrier-protein]: step 1/2. Functionally, catalyzes the transfer of endogenously produced octanoic acid from octanoyl-acyl-carrier-protein onto the lipoyl domains of lipoate-dependent enzymes. Lipoyl-ACP can also act as a substrate although octanoyl-ACP is likely to be the physiological substrate. This is Octanoyltransferase from Photorhabdus laumondii subsp. laumondii (strain DSM 15139 / CIP 105565 / TT01) (Photorhabdus luminescens subsp. laumondii).